The primary structure comprises 309 residues: Homoserine kinase (309 aa).

95–105 (PQSRGLGSSAA) is an ATP binding site.

It belongs to the GHMP kinase family. Homoserine kinase subfamily.

The protein localises to the cytoplasm. The enzyme catalyses L-homoserine + ATP = O-phospho-L-homoserine + ADP + H(+). The protein operates within amino-acid biosynthesis; L-threonine biosynthesis; L-threonine from L-aspartate: step 4/5. Functionally, catalyzes the ATP-dependent phosphorylation of L-homoserine to L-homoserine phosphate. This Corynebacterium efficiens (strain DSM 44549 / YS-314 / AJ 12310 / JCM 11189 / NBRC 100395) protein is Homoserine kinase.